Consider the following 89-residue polypeptide: Small ribosomal subunit protein uS15 (89 aa).

The protein belongs to the universal ribosomal protein uS15 family. As to quaternary structure, part of the 30S ribosomal subunit. Forms a bridge to the 50S subunit in the 70S ribosome, contacting the 23S rRNA.

One of the primary rRNA binding proteins, it binds directly to 16S rRNA where it helps nucleate assembly of the platform of the 30S subunit by binding and bridging several RNA helices of the 16S rRNA. Its function is as follows. Forms an intersubunit bridge (bridge B4) with the 23S rRNA of the 50S subunit in the ribosome. The protein is Small ribosomal subunit protein uS15 of Pasteurella multocida (strain Pm70).